The sequence spans 913 residues: Eukaryotic translation initiation factor 3 subunit C (913 aa).

Residues 1 to 44 are disordered; it reads MSRFFTTGSDSESESSLSGEELVTKPVGGNYGKQPLLLSEDEED. Residues 8–21 are compositionally biased toward low complexity; that stretch reads GSDSESESSLSGEE. Phosphoserine occurs at positions 9, 11, 13, 15, 16, 18, and 39. N6-acetyllysine is present on lysine 99. 2 disordered regions span residues 157-301 and 522-542; these read TSYK…GGEW and QLTP…NEGE. 4 positions are modified to phosphoserine: serine 166, serine 178, serine 181, and serine 182. Positions 166-190 are enriched in acidic residues; that stretch reads SADEDAEKNEEDSEGSSDEDEDEDG. Over residues 199–216 the composition is skewed to basic and acidic residues; sequence KKSEAPSGESRKFLKKMD. Acidic residues predominate over residues 217 to 232; the sequence is DEDEDSEDSEDDEDWD. Residues 261-278 are compositionally biased toward basic and acidic residues; sequence PTTDEDKKAAEKKREDKA. Residues 522–531 are compositionally biased toward polar residues; that stretch reads QLTPPEGSSK. The residue at position 524 (threonine 524) is a Phosphothreonine. Lysine 643 carries the N6-acetyllysine modification. A PCI domain is found at 673–849; it reads FHLHINLELL…QTVVMHRTEP (177 aa). The tract at residues 885–913 is disordered; the sequence is FRDQKDGYRKNEGYMRRGGYRQQQSQTAY. The segment covering 886–899 has biased composition (basic and acidic residues); it reads RDQKDGYRKNEGYM. Serine 909 carries the post-translational modification Phosphoserine.

Belongs to the eIF-3 subunit C family. Component of the eukaryotic translation initiation factor 3 (eIF-3) complex, which is composed of 13 subunits: EIF3A, EIF3B, EIF3C, EIF3D, EIF3E, EIF3F, EIF3G, EIF3H, EIF3I, EIF3J, EIF3K, EIF3L and EIF3M. The eIF-3 complex appears to include 3 stable modules: module A is composed of EIF3A, EIF3B, EIF3G and EIF3I; module B is composed of EIF3F, EIF3H, and EIF3M; and module C is composed of EIF3C, EIF3D, EIF3E, EIF3K and EIF3L. EIF3C of module C binds EIF3B of module A and EIF3H of module B, thereby linking the three modules. EIF3J is a labile subunit that binds to the eIF-3 complex via EIF3B. The eIF-3 complex interacts with RPS6KB1 under conditions of nutrient depletion. Mitogenic stimulation leads to binding and activation of a complex composed of MTOR and RPTOR, leading to phosphorylation and release of RPS6KB1 and binding of EIF4B to eIF-3. Interacts with ALKBH4, IFIT1 and IFIT2. Interacts with BZW2/5MP1. In terms of processing, phosphorylated. Phosphorylation is enhanced upon serum stimulation.

The protein resides in the cytoplasm. Its function is as follows. Component of the eukaryotic translation initiation factor 3 (eIF-3) complex, which is required for several steps in the initiation of protein synthesis. The eIF-3 complex associates with the 40S ribosome and facilitates the recruitment of eIF-1, eIF-1A, eIF-2:GTP:methionyl-tRNAi and eIF-5 to form the 43S pre-initiation complex (43S PIC). The eIF-3 complex stimulates mRNA recruitment to the 43S PIC and scanning of the mRNA for AUG recognition. The eIF-3 complex is also required for disassembly and recycling of post-termination ribosomal complexes and subsequently prevents premature joining of the 40S and 60S ribosomal subunits prior to initiation. The eIF-3 complex specifically targets and initiates translation of a subset of mRNAs involved in cell proliferation, including cell cycling, differentiation and apoptosis, and uses different modes of RNA stem-loop binding to exert either translational activation or repression. In Pongo abelii (Sumatran orangutan), this protein is Eukaryotic translation initiation factor 3 subunit C.